The sequence spans 226 residues: 7-cyano-7-deazaguanine synthase (226 aa).

ATP is bound at residue 8 to 18 (ISGGLDSTTCL). Residues Cys-188, Cys-198, Cys-201, and Cys-204 each coordinate Zn(2+).

Belongs to the QueC family. Zn(2+) is required as a cofactor.

It carries out the reaction 7-carboxy-7-deazaguanine + NH4(+) + ATP = 7-cyano-7-deazaguanine + ADP + phosphate + H2O + H(+). Its pathway is purine metabolism; 7-cyano-7-deazaguanine biosynthesis. Its function is as follows. Catalyzes the ATP-dependent conversion of 7-carboxy-7-deazaguanine (CDG) to 7-cyano-7-deazaguanine (preQ(0)). In Coxiella burnetii (strain RSA 331 / Henzerling II), this protein is 7-cyano-7-deazaguanine synthase.